Reading from the N-terminus, the 175-residue chain is Peptide deformylase (175 aa).

Residues cysteine 96 and histidine 138 each contribute to the Fe cation site. The active site involves glutamate 139. Histidine 142 serves as a coordination point for Fe cation.

This sequence belongs to the polypeptide deformylase family. Fe(2+) is required as a cofactor.

The catalysed reaction is N-terminal N-formyl-L-methionyl-[peptide] + H2O = N-terminal L-methionyl-[peptide] + formate. Removes the formyl group from the N-terminal Met of newly synthesized proteins. Requires at least a dipeptide for an efficient rate of reaction. N-terminal L-methionine is a prerequisite for activity but the enzyme has broad specificity at other positions. The protein is Peptide deformylase of Rhodopseudomonas palustris (strain BisB5).